The primary structure comprises 91 residues: Large ribosomal subunit protein bL28 (91 aa).

The tract at residues 1 to 23 (MSRVCELTGKGPMSGNNVSHANN) is disordered.

Belongs to the bacterial ribosomal protein bL28 family.

The sequence is that of Large ribosomal subunit protein bL28 from Paracoccus denitrificans (strain Pd 1222).